The following is an 800-amino-acid chain: Kolavenyl diphosphate synthase TPS5, chloroplastic (800 aa).

The transit peptide at 1-75 (MSLAYSQATS…VILTAEKSVD (75 aa)) directs the protein to the chloroplast. Position 244 (lysine 244) interacts with substrate. Positions 375 and 377 each coordinate Mg(2+). The DXDD motif motif lies at 375–378 (DVDD). Lysine 461 lines the substrate pocket.

Belongs to the terpene synthase family. It depends on Mg(2+) as a cofactor. In terms of tissue distribution, mostly expressed in trichomes of leaves and fruits.

Its subcellular location is the plastid. It localises to the chloroplast. It carries out the reaction (2E,6E,10E)-geranylgeranyl diphosphate = (+)-kolavenyl diphosphate. It functions in the pathway secondary metabolite biosynthesis; terpenoid biosynthesis. In terms of biological role, involved in the biosynthesis of labdane-type diterpenoid including cleroda-dienols, and peregrinol lactones and furan derivatives, dopaminergic diterpenoids that can bind to dopamine receptors in the human pituitary gland, have probably ability to lower prolactin levels, and are used to treat menstrual cycle disorders (e.g. premenstrual syndrome and mastodynia). Terpene synthase that produces kolavenyl diphosphate from geranylgeranyl diphosphate (GGPP). This chain is Kolavenyl diphosphate synthase TPS5, chloroplastic, found in Vitex agnus-castus (Chaste tree).